The primary structure comprises 510 residues: Inositol-3-phosphate synthase (510 aa).

NAD(+)-binding residues include glycine 70, glycine 71, asparagine 72, asparagine 73, aspartate 143, isoleucine 180, glutamine 190, arginine 193, threonine 230, alanine 231, asparagine 232, threonine 233, glycine 281, serine 282, aspartate 306, serine 309, asparagine 340, asparagine 341, aspartate 342, lysine 355, glycine 393, aspartate 394, aspartate 422, and serine 423.

The protein belongs to the myo-inositol 1-phosphate synthase family. It depends on NAD(+) as a cofactor.

Its subcellular location is the cytoplasm. The protein localises to the cytosol. It is found in the nucleus. The catalysed reaction is D-glucose 6-phosphate = 1D-myo-inositol 3-phosphate. The protein operates within polyol metabolism; myo-inositol biosynthesis; myo-inositol from D-glucose 6-phosphate: step 1/2. Key enzyme in myo-inositol biosynthesis pathway that catalyzes the conversion of glucose 6-phosphate to 1-myo-inositol 1-phosphate in a NAD-dependent manner. The polypeptide is Inositol-3-phosphate synthase (TUR1) (Spirodela polyrhiza (Giant duckweed)).